We begin with the raw amino-acid sequence, 618 residues long: Cationic amino acid transporter 3 (618 aa).

Topologically, residues 1–36 (MLWQALRRFGQKLVRRRVLELGMGETRLARCLSTLD) are cytoplasmic. Residues 37–57 (LVALGVGSTLGAGVYVLAGEV) traverse the membrane as a helical segment. Over 58–61 (AKDK) the chain is Extracellular. The helical transmembrane segment at 62–82 (AGPSIVICFLVAALSSVLAGL) threads the bilayer. The Cytoplasmic segment spans residues 83–107 (CYAEFGARVPGSGSAYLYSYVTVGE). A helical transmembrane segment spans residues 108-128 (LWAFTTGWNLILSYVIGTASV). Residues 129–162 (ARAWSSAFDNLIGNHISRTLKGTILLKMPHVLAE) are Extracellular-facing. Residues 163 to 183 (YPDFFALALVLLLTGLLVLGA) form a helical membrane-spanning segment. Residues 184–191 (SKSALVTK) lie on the Cytoplasmic side of the membrane. A helical membrane pass occupies residues 192–212 (VFTGMNLLVLSFVIISGFIKG). At 213 to 244 (ELRNWKLTKEDYCLTMSESNGTCSLDSMGSGG) the chain is on the extracellular side. Asparagine 232 carries N-linked (GlcNAc...) asparagine glycosylation. Residues 245–265 (FMPFGLEGILRGAATCFYAFV) traverse the membrane as a helical segment. At 266–285 (GFDCIATTGEEAQNPQRSIP) the chain is on the cytoplasmic side. Residues 286–306 (MGIVISMFICFLAYFGVSSAL) traverse the membrane as a helical segment. Residues 307–335 (TLMMPYYKLHPESPLPEAFSYVGWEPARY) are Extracellular-facing. A helical membrane pass occupies residues 336–356 (LVAIGSLCALSTSLLGSMFPM). The Cytoplasmic segment spans residues 357 to 380 (PRVMYSMAEDGLLFRVLAKVHSVT). Residues 381-401 (HIPIVATLVSGVIAAFMAFLF) form a helical membrane-spanning segment. Residues 402–406 (ELTDL) are Extracellular-facing. A helical transmembrane segment spans residues 407–427 (VDLMSIGTLLAHSLVSICVLI). The Cytoplasmic portion of the chain corresponds to 428–474 (LRYQPDQEMKSVEEEMELQEETLEAEKLTVQALFCPVNSIPTLLSGR). Residues 475-495 (VVYVCSSLLAVLLTVLCLVLT) form a helical membrane-spanning segment. The Extracellular segment spans residues 496-506 (WWTTPLRSGDP). A helical membrane pass occupies residues 507–527 (VWVTVVVLILGLILAISGVIW). Topologically, residues 528-539 (RQPQNRTPLHFK) are cytoplasmic. A helical membrane pass occupies residues 540 to 560 (VPAVPLLPLVSIFVNVYLMMQ). At 561–568 (MTAGTWAR) the chain is on the extracellular side. Residues 569 to 589 (FGIWMLIGFAIYFGYGIQHSM) form a helical membrane-spanning segment. The Cytoplasmic portion of the chain corresponds to 590-618 (KEVKNHQTLPKTRAQTIDLDLTTSCVHSI). Threonine 605 carries the phosphothreonine modification. Residue serine 617 is modified to Phosphoserine.

This sequence belongs to the amino acid-polyamine-organocation (APC) superfamily. Cationic amino acid transporter (CAT) (TC 2.A.3.3) family. N-glycosylated. In terms of tissue distribution, expressed in adult brain and in a wide variety of embryonic tissues.

It is found in the cell membrane. The enzyme catalyses L-arginine(in) = L-arginine(out). It catalyses the reaction L-lysine(in) = L-lysine(out). It carries out the reaction L-ornithine(in) = L-ornithine(out). Its function is as follows. Uniporter that mediates the uptake of cationic L-amino acids such as L-arginine, L-lysine and L-ornithine. The transport is sodium ions- and pH-independent, moderately trans-stimulated and is mediated by passive diffusion. This chain is Cationic amino acid transporter 3, found in Mus musculus (Mouse).